A 207-amino-acid chain; its full sequence is MARYLGPKAKLSRREGTDLFLKSARRSIADKAKFDSKPGQHGRTSGARTSDFGLQLREKQKVKRMYGVLEKQFRRYFEAADRRKGNTGANLLSLLESRLDNVVYRMGFGSTRAEARQLVSHKAITVNGQSVNIASYLVKPGDVVAVREKSKKQARIVEALQLAQQVGIPAWVEVNADKVEGTFKKAPDRDEFGADINESLIVELYSR.

A disordered region spans residues 31–53 (KAKFDSKPGQHGRTSGARTSDFG). The region spanning 97–157 (SRLDNVVYRM…EKSKKQARIV (61 aa)) is the S4 RNA-binding domain.

This sequence belongs to the universal ribosomal protein uS4 family. Part of the 30S ribosomal subunit. Contacts protein S5. The interaction surface between S4 and S5 is involved in control of translational fidelity.

Its function is as follows. One of the primary rRNA binding proteins, it binds directly to 16S rRNA where it nucleates assembly of the body of the 30S subunit. With S5 and S12 plays an important role in translational accuracy. In Paracidovorax citrulli (strain AAC00-1) (Acidovorax citrulli), this protein is Small ribosomal subunit protein uS4.